The chain runs to 116 residues: S-adenosylmethionine decarboxylase proenzyme (116 aa).

Catalysis depends on Ser-63, which acts as the Schiff-base intermediate with substrate; via pyruvic acid. Ser-63 carries the pyruvic acid (Ser); by autocatalysis modification. The active-site Proton acceptor; for processing activity is His-68. Cys-83 serves as the catalytic Proton donor; for catalytic activity.

The protein belongs to the prokaryotic AdoMetDC family. Type 1 subfamily. In terms of assembly, heterotetramer of two alpha and two beta chains arranged as a dimer of alpha/beta heterodimers. It depends on pyruvate as a cofactor. Post-translationally, is synthesized initially as an inactive proenzyme. Formation of the active enzyme involves a self-maturation process in which the active site pyruvoyl group is generated from an internal serine residue via an autocatalytic post-translational modification. Two non-identical subunits are generated from the proenzyme in this reaction, and the pyruvate is formed at the N-terminus of the alpha chain, which is derived from the carboxyl end of the proenzyme. The post-translation cleavage follows an unusual pathway, termed non-hydrolytic serinolysis, in which the side chain hydroxyl group of the serine supplies its oxygen atom to form the C-terminus of the beta chain, while the remainder of the serine residue undergoes an oxidative deamination to produce ammonia and the pyruvoyl group blocking the N-terminus of the alpha chain.

The catalysed reaction is S-adenosyl-L-methionine + H(+) = S-adenosyl 3-(methylsulfanyl)propylamine + CO2. The protein operates within amine and polyamine biosynthesis; S-adenosylmethioninamine biosynthesis; S-adenosylmethioninamine from S-adenosyl-L-methionine: step 1/1. Its function is as follows. Catalyzes the decarboxylation of S-adenosylmethionine to S-adenosylmethioninamine (dcAdoMet), the propylamine donor required for the synthesis of the polyamines spermine and spermidine from the diamine putrescine. In Clostridium botulinum (strain Okra / Type B1), this protein is S-adenosylmethionine decarboxylase proenzyme.